Reading from the N-terminus, the 264-residue chain is Thymidylate synthase (264 aa).

Arginine 21 is a binding site for dUMP. A (6R)-5,10-methylene-5,6,7,8-tetrahydrofolate-binding site is contributed by histidine 51. Residue 126–127 (RR) participates in dUMP binding. Residue cysteine 146 is the Nucleophile of the active site. Residues 166-169 (RSAD), asparagine 177, and 207-209 (HLY) contribute to the dUMP site. A (6R)-5,10-methylene-5,6,7,8-tetrahydrofolate-binding site is contributed by aspartate 169. Residue serine 263 coordinates (6R)-5,10-methylene-5,6,7,8-tetrahydrofolate.

The protein belongs to the thymidylate synthase family. Bacterial-type ThyA subfamily. In terms of assembly, homodimer.

The protein localises to the cytoplasm. It carries out the reaction dUMP + (6R)-5,10-methylene-5,6,7,8-tetrahydrofolate = 7,8-dihydrofolate + dTMP. Its pathway is pyrimidine metabolism; dTTP biosynthesis. In terms of biological role, catalyzes the reductive methylation of 2'-deoxyuridine-5'-monophosphate (dUMP) to 2'-deoxythymidine-5'-monophosphate (dTMP) while utilizing 5,10-methylenetetrahydrofolate (mTHF) as the methyl donor and reductant in the reaction, yielding dihydrofolate (DHF) as a by-product. This enzymatic reaction provides an intracellular de novo source of dTMP, an essential precursor for DNA biosynthesis. In Laribacter hongkongensis (strain HLHK9), this protein is Thymidylate synthase.